We begin with the raw amino-acid sequence, 94 residues long: Acylphosphatase (94 aa).

Positions 8 to 94 (TLFIIVHGKV…GRRFKHFAQH (87 aa)) constitute an Acylphosphatase-like domain. Residues Arg23 and Asn41 contribute to the active site. Residues 69–94 (PPAASVTELESRREDGGRRFKHFAQH) are disordered. Basic and acidic residues predominate over residues 77 to 86 (LESRREDGGR).

The protein belongs to the acylphosphatase family.

The catalysed reaction is an acyl phosphate + H2O = a carboxylate + phosphate + H(+). In Bordetella avium (strain 197N), this protein is Acylphosphatase (acyP).